A 154-amino-acid chain; its full sequence is Superoxide dismutase [Cu-Zn] (154 aa).

Cu cation contacts are provided by His47 and His64. Cysteines 58 and 147 form a disulfide. Zn(2+) contacts are provided by His64, His72, His81, and Asp84. Position 121 (His121) interacts with Cu cation. Arg144 is a substrate binding site.

This sequence belongs to the Cu-Zn superoxide dismutase family. Homodimer. Cu cation is required as a cofactor. It depends on Zn(2+) as a cofactor.

Its subcellular location is the cytoplasm. The enzyme catalyses 2 superoxide + 2 H(+) = H2O2 + O2. Destroys radicals which are normally produced within the cells and which are toxic to biological systems. The protein is Superoxide dismutase [Cu-Zn] (SOD1) of Pleurocordyceps sinensis (Polycephalomyces sinensis).